A 523-amino-acid chain; its full sequence is Glycerate kinase (523 aa).

Phosphoserine is present on S60.

The protein belongs to the glycerate kinase type-2 family. In terms of tissue distribution, widely expressed.

It is found in the cytoplasm. The protein resides in the mitochondrion. It carries out the reaction (R)-glycerate + ATP = (2R)-3-phosphoglycerate + ADP + H(+). The protein is Glycerate kinase (GLYCTK) of Homo sapiens (Human).